The following is a 302-amino-acid chain: Sulfate adenylyltransferase subunit 2 (302 aa).

This sequence belongs to the PAPS reductase family. CysD subfamily. Heterodimer composed of CysD, the smaller subunit, and CysN.

It catalyses the reaction sulfate + ATP + H(+) = adenosine 5'-phosphosulfate + diphosphate. It participates in sulfur metabolism; hydrogen sulfide biosynthesis; sulfite from sulfate: step 1/3. Functionally, with CysN forms the ATP sulfurylase (ATPS) that catalyzes the adenylation of sulfate producing adenosine 5'-phosphosulfate (APS) and diphosphate, the first enzymatic step in sulfur assimilation pathway. APS synthesis involves the formation of a high-energy phosphoric-sulfuric acid anhydride bond driven by GTP hydrolysis by CysN coupled to ATP hydrolysis by CysD. This is Sulfate adenylyltransferase subunit 2 from Photorhabdus laumondii subsp. laumondii (strain DSM 15139 / CIP 105565 / TT01) (Photorhabdus luminescens subsp. laumondii).